Here is a 185-residue protein sequence, read N- to C-terminus: HTH-type transcriptional regulator SAR2658 (185 aa).

Residues 6–66 (KENRQRIEEI…YVIQRDLDIF (61 aa)) enclose the HTH tetR-type domain. Residues 29 to 48 (SMNRIAKELGIGMGTLYRHF) constitute a DNA-binding region (H-T-H motif).

The polypeptide is HTH-type transcriptional regulator SAR2658 (Staphylococcus aureus (strain MRSA252)).